A 121-amino-acid polypeptide reads, in one-letter code: Type II secretion system protein I (121 aa).

Positions 1-6 (MKKQSG) are cleaved as a propeptide — leader sequence. M7 bears the N-methylmethionine mark. Residues 7–27 (MTLIEVMVALVVFALAGLAVM) traverse the membrane as a helical segment.

The protein belongs to the GSP I family. In terms of assembly, type II secretion is composed of four main components: the outer membrane complex, the inner membrane complex, the cytoplasmic secretion ATPase and the periplasm-spanning pseudopilus. Interacts with core component PulG. Post-translationally, cleaved by prepilin peptidase. Methylated by prepilin peptidase at the amino group of the N-terminal methionine once the leader sequence is cleaved by prepilin peptidase.

The protein localises to the cell inner membrane. In terms of biological role, component of the type II secretion system required for the energy-dependent secretion of extracellular factors such as proteases and toxins from the periplasm. Part of the pseudopilus tip complex that is critical for the recognition and binding of secretion substrates. In Klebsiella pneumoniae, this protein is Type II secretion system protein I (pulI).